The sequence spans 151 residues: Neuroglobin (151 aa).

In terms of domain architecture, Globin spans 1-149; that stretch reads MERPEPELIR…VVQAMSRGWD (149 aa). His-64 and His-96 together coordinate heme b.

This sequence belongs to the globin family. As to quaternary structure, monomer. Homodimer and homotetramer; disulfide-linked. Mainly monomeric but also detected as part of homodimers and homotetramers. Interacts with 14-3-3 proteins; regulates the phosphorylation of NGB. Could interact (ferrous form) with G-alpha(i) proteins (GTP-bound form). Phosphorylated during hypoxia by ERK1/ERK2. Phosphorylation regulates the heme pocket hexacoordination preventing the association of His-64 with the heme metal center. Thereby, promotes the access of dioxygen and nitrite to the heme and stimulates the nitrite reductase activity. Phosphorylation during hypoxia is stabilized by 14-3-3 proteins.

It localises to the cytoplasm. The protein localises to the cytosol. Its subcellular location is the mitochondrion matrix. The enzyme catalyses Fe(III)-heme b-[protein] + nitric oxide + H2O = Fe(II)-heme b-[protein] + nitrite + 2 H(+). In terms of biological role, monomeric globin with a bis-histidyl six-coordinate heme-iron atom through which it can bind dioxygen, carbon monoxide and nitric oxide. Could help transport oxygen and increase its availability to the metabolically active neuronal tissues, though its low quantity in tissues as well as its high affinity for dioxygen, which may limit its oxygen-releasing ability, argue against it. The ferrous/deoxygenated form exhibits a nitrite reductase activity and it could produce nitric oxide which in turn inhibits cellular respiration in response to hypoxia. In its ferrous/deoxygenated state, it may also exhibit GDI (Guanine nucleotide Dissociation Inhibitor) activity toward heterotrimeric G-alpha proteins, thereby regulating signal transduction to facilitate neuroprotective responses in the wake of hypoxia and associated oxidative stress. This is Neuroglobin from Canis lupus familiaris (Dog).